Reading from the N-terminus, the 466-residue chain is RuvB-like helicase 2 (466 aa).

74–81 (GPPSTGKT) provides a ligand contact to ATP.

Belongs to the RuvB family. In terms of assembly, may form heterododecamers with RVB1. Component of the SWR1 chromatin remodeling complex, the INO80 chromatin remodeling complex, and of the R2TP complex.

It is found in the nucleus. It catalyses the reaction ATP + H2O = ADP + phosphate + H(+). In terms of biological role, DNA helicase which participates in several chromatin remodeling complexes, including the SWR1 and the INO80 complexes. The SWR1 complex mediates the ATP-dependent exchange of histone H2A for the H2A variant HZT1 leading to transcriptional regulation of selected genes by chromatin remodeling. The INO80 complex remodels chromatin by shifting nucleosomes and is involved in DNA repair. Also involved in pre-rRNA processing. The polypeptide is RuvB-like helicase 2 (RVB2) (Yarrowia lipolytica (strain CLIB 122 / E 150) (Yeast)).